The sequence spans 428 residues: Sporulation kinase C (428 aa).

2 consecutive transmembrane segments (helical) span residues 8–28 and 36–56; these read IISI…FYFI and PVDI…AYYI. One can recognise a PAS domain in the interval 76–147; the sequence is LSEEKNRIMD…NTQIQNKASS (72 aa). Residues 148–200 enclose the PAC domain; that stretch reads GMFTAKYVTKNGTIFWGEVHYKLYYDRDDQFTGSLGTMSDITERKEAEDELIE. Positions 221–426 constitute a Histidine kinase domain; it reads GIAHEVRNPL…VFQVVLPLKS (206 aa). His224 bears the Phosphohistidine; by autocatalysis mark.

In terms of assembly, oligomerizes, probably forms homodimers; oligomerization is assisted by FloT. Interacts with FloT. Another study shows only rare colocalization with FloT or FloA membrane assemblies. KinC membrane assemblies are more mobile than FloT membrane assemblies.

It is found in the cell membrane. The protein localises to the membrane raft. The enzyme catalyses ATP + protein L-histidine = ADP + protein N-phospho-L-histidine.. Functionally, phosphorylates the sporulation-regulatory protein Spo0A a transcription factor that also controls biofilm formation. Requires FloT and FloA for localization to DRMs and for activity. The chain is Sporulation kinase C from Bacillus subtilis (strain 168).